A 342-amino-acid chain; its full sequence is Putative ABC transporter anion-binding protein HVO_1888 (342 aa).

Residues 1 to 32 (MAIERRRFLQAAGVGAVLGLSGCTGNTSPPQA) constitute a signal peptide (tat-type signal). The segment covering 24-37 (TGNTSPPQANNETA) has biased composition (polar residues). Positions 24–52 (TGNTSPPQANNETAEGSGGSESGDGSTQE) are disordered.

In terms of assembly, the complex is composed of two ATP-binding proteins (HVO_1886), two transmembrane proteins (HVO_1887) and a solute-binding protein (HVO_1888). Predicted to be exported by the Tat system. The position of the signal peptide cleavage has not been experimentally proven.

Part of an ABC transporter complex involved in anions import. The chain is Putative ABC transporter anion-binding protein HVO_1888 from Haloferax volcanii (strain ATCC 29605 / DSM 3757 / JCM 8879 / NBRC 14742 / NCIMB 2012 / VKM B-1768 / DS2) (Halobacterium volcanii).